We begin with the raw amino-acid sequence, 384 residues long: Probable L-tyrosine/L-aspartate decarboxylase (384 aa).

Lys-233 carries the N6-(pyridoxal phosphate)lysine modification.

This sequence belongs to the group II decarboxylase family. MfnA subfamily. The cofactor is pyridoxal 5'-phosphate.

The catalysed reaction is L-tyrosine + H(+) = tyramine + CO2. It carries out the reaction L-aspartate + H(+) = beta-alanine + CO2. It functions in the pathway cofactor biosynthesis; methanofuran biosynthesis. It participates in cofactor biosynthesis; coenzyme A biosynthesis. In terms of biological role, catalyzes the decarboxylation of L-tyrosine to produce tyramine for methanofuran biosynthesis. Can also catalyze the decarboxylation of L-aspartate to produce beta-alanine for coenzyme A (CoA) biosynthesis. This is Probable L-tyrosine/L-aspartate decarboxylase from Methanococcus maripaludis (strain C5 / ATCC BAA-1333).